The sequence spans 121 residues: Ribonuclease P protein component (121 aa).

The protein belongs to the RnpA family. Consists of a catalytic RNA component (M1 or rnpB) and a protein subunit.

The enzyme catalyses Endonucleolytic cleavage of RNA, removing 5'-extranucleotides from tRNA precursor.. Its function is as follows. RNaseP catalyzes the removal of the 5'-leader sequence from pre-tRNA to produce the mature 5'-terminus. It can also cleave other RNA substrates such as 4.5S RNA. The protein component plays an auxiliary but essential role in vivo by binding to the 5'-leader sequence and broadening the substrate specificity of the ribozyme. This chain is Ribonuclease P protein component, found in Lactobacillus delbrueckii subsp. bulgaricus (strain ATCC 11842 / DSM 20081 / BCRC 10696 / JCM 1002 / NBRC 13953 / NCIMB 11778 / NCTC 12712 / WDCM 00102 / Lb 14).